The following is a 190-amino-acid chain: MIFLNIISISIRLLLILTLITGILYPIVTTGFAERFFPFRSSGSRVVIQGKIVGSELIAQKFIKDEYFWPRPSAMDYAAGASNASVTNVFLKAKVEERKKFLLEKHSEQTQVPPDLLFASGSGLDPHISPDSALFQINRVAKSRKLTEGQILRLKNIVEESVEKGYIGENRINVLLLNLKLDSEFGIILK.

A helical membrane pass occupies residues 13-33 (LLLILTLITGILYPIVTTGFA).

This sequence belongs to the KdpC family. The system is composed of three essential subunits: KdpA, KdpB and KdpC.

Its subcellular location is the cell inner membrane. In terms of biological role, part of the high-affinity ATP-driven potassium transport (or Kdp) system, which catalyzes the hydrolysis of ATP coupled with the electrogenic transport of potassium into the cytoplasm. This subunit acts as a catalytic chaperone that increases the ATP-binding affinity of the ATP-hydrolyzing subunit KdpB by the formation of a transient KdpB/KdpC/ATP ternary complex. This Leptospira interrogans serogroup Icterohaemorrhagiae serovar copenhageni (strain Fiocruz L1-130) protein is Potassium-transporting ATPase KdpC subunit.